The chain runs to 642 residues: Medium-chain-fatty-acid--[acyl-carrier-protein] ligase TtuA (642 aa).

Belongs to the ATP-dependent AMP-binding enzyme family.

It carries out the reaction a medium-chain fatty acid + holo-[ACP] + ATP = a medium-chain fatty acyl-[ACP] + AMP + diphosphate. It catalyses the reaction a medium-chain fatty acid + ATP + H(+) = a medium-chain fatty acyl-AMP + diphosphate. The catalysed reaction is a medium-chain fatty acyl-AMP + holo-[ACP] = a medium-chain fatty acyl-[ACP] + AMP + H(+). The enzyme catalyses decanoate + holo-[ACP] + ATP = decanoyl-[ACP] + AMP + diphosphate. It carries out the reaction decanoate + ATP + H(+) = decanoyl-AMP + diphosphate. It catalyses the reaction decanoyl-AMP + holo-[ACP] = decanoyl-[ACP] + AMP + H(+). Its function is as follows. Ligase likely involved in the biosynthesis of a polyyne metabolite. Catalyzes the activation of decanoic acid, followed by the loading of the activated decanoic acid onto the acyl carrier protein TtuC. Decanoic acid is the preferred substrate, but it can also use 10-undecenoic acid and lauric acid. Nonanoic acid and 7-octenoic acid are only weakly activated. The polypeptide is Medium-chain-fatty-acid--[acyl-carrier-protein] ligase TtuA (Teredinibacter turnerae (strain ATCC 39867 / T7901)).